The primary structure comprises 601 residues: Elongation factor 4 (601 aa).

Residues 8-189 (EQIRNFGIIA…LIVRKAPPPK (182 aa)) enclose the tr-type G domain. 20–25 (DHGKST) is a binding site for GTP.

This sequence belongs to the TRAFAC class translation factor GTPase superfamily. Classic translation factor GTPase family. LepA subfamily.

It is found in the cell membrane. It catalyses the reaction GTP + H2O = GDP + phosphate + H(+). Functionally, required for accurate and efficient protein synthesis under certain stress conditions. May act as a fidelity factor of the translation reaction, by catalyzing a one-codon backward translocation of tRNAs on improperly translocated ribosomes. Back-translocation proceeds from a post-translocation (POST) complex to a pre-translocation (PRE) complex, thus giving elongation factor G a second chance to translocate the tRNAs correctly. Binds to ribosomes in a GTP-dependent manner. The polypeptide is Elongation factor 4 (Tropheryma whipplei (strain Twist) (Whipple's bacillus)).